A 138-amino-acid polypeptide reads, in one-letter code: Transcription antitermination protein NusB (138 aa).

It belongs to the NusB family.

Involved in transcription antitermination. Required for transcription of ribosomal RNA (rRNA) genes. Binds specifically to the boxA antiterminator sequence of the ribosomal RNA (rrn) operons. The polypeptide is Transcription antitermination protein NusB (Geobacter sulfurreducens (strain ATCC 51573 / DSM 12127 / PCA)).